Reading from the N-terminus, the 819-residue chain is DNA topoisomerase 4 subunit A (819 aa).

The Topo IIA-type catalytic domain occupies leucine 30 to leucine 496. Tyrosine 118 serves as the catalytic O-(5'-phospho-DNA)-tyrosine intermediate.

This sequence belongs to the type II topoisomerase GyrA/ParC subunit family. ParC type 2 subfamily. Heterotetramer composed of ParC and ParE.

The protein resides in the cell membrane. It carries out the reaction ATP-dependent breakage, passage and rejoining of double-stranded DNA.. In terms of biological role, topoisomerase IV is essential for chromosome segregation. It relaxes supercoiled DNA. Performs the decatenation events required during the replication of a circular DNA molecule. This chain is DNA topoisomerase 4 subunit A, found in Streptococcus pyogenes serotype M3 (strain ATCC BAA-595 / MGAS315).